A 211-amino-acid chain; its full sequence is Ras-related protein RABB1c (211 aa).

Serine 2 is modified (N-acetylserine). 13–21 lines the GTP pocket; the sequence is GDTGVGKSC. Positions 35–43 match the Effector region motif; that stretch reads HDLTIGVEF. GTP is bound by residues 61 to 65, 119 to 122, and 149 to 151; these read DTAGQ, NKCD, and SAK. S-geranylgeranyl cysteine attachment occurs at residues cysteine 209 and cysteine 210.

This sequence belongs to the small GTPase superfamily. Rab family.

It is found in the cell membrane. Functionally, intracellular vesicle trafficking and protein transport. This is Ras-related protein RABB1c (RABB1C) from Arabidopsis thaliana (Mouse-ear cress).